A 63-amino-acid polypeptide reads, in one-letter code: Large ribosomal subunit protein bL28 (63 aa).

The protein belongs to the bacterial ribosomal protein bL28 family.

The polypeptide is Large ribosomal subunit protein bL28 (Petrotoga mobilis (strain DSM 10674 / SJ95)).